We begin with the raw amino-acid sequence, 206 residues long: High frequency lysogenization protein HflD homolog (206 aa).

The protein belongs to the HflD family.

The protein localises to the cytoplasm. It localises to the cell inner membrane. The polypeptide is High frequency lysogenization protein HflD homolog (Pseudomonas syringae pv. tomato (strain ATCC BAA-871 / DC3000)).